The primary structure comprises 370 residues: Chaperone protein DnaJ (370 aa).

The 67-residue stretch at 7-73 (DYYEILGVPR…QKRAMYDRFG (67 aa)) folds into the J domain. The CR-type zinc-finger motif lies at 144-226 (GTEIPIEYER…CGGSGRVLRR (83 aa)). Positions 157, 160, 174, 177, 200, 203, 214, and 217 each coordinate Zn(2+). 4 CXXCXGXG motif repeats span residues 157 to 164 (CPRCGGTG), 174 to 181 (CPRCGGTG), 200 to 207 (CDECGGTG), and 214 to 221 (CHECGGSG).

Belongs to the DnaJ family. Homodimer. It depends on Zn(2+) as a cofactor.

Its subcellular location is the cytoplasm. In terms of biological role, participates actively in the response to hyperosmotic and heat shock by preventing the aggregation of stress-denatured proteins and by disaggregating proteins, also in an autonomous, DnaK-independent fashion. Unfolded proteins bind initially to DnaJ; upon interaction with the DnaJ-bound protein, DnaK hydrolyzes its bound ATP, resulting in the formation of a stable complex. GrpE releases ADP from DnaK; ATP binding to DnaK triggers the release of the substrate protein, thus completing the reaction cycle. Several rounds of ATP-dependent interactions between DnaJ, DnaK and GrpE are required for fully efficient folding. Also involved, together with DnaK and GrpE, in the DNA replication of plasmids through activation of initiation proteins. This chain is Chaperone protein DnaJ, found in Thermotoga neapolitana (strain ATCC 49049 / DSM 4359 / NBRC 107923 / NS-E).